Here is a 467-residue protein sequence, read N- to C-terminus: A-type ATP synthase subunit B (467 aa).

It belongs to the ATPase alpha/beta chains family. As to quaternary structure, has multiple subunits with at least A(3), B(3), C, D, E, F, H, I and proteolipid K(x).

The protein localises to the cell membrane. Functionally, component of the A-type ATP synthase that produces ATP from ADP in the presence of a proton gradient across the membrane. The B chain is a regulatory subunit. This Methanosphaera stadtmanae (strain ATCC 43021 / DSM 3091 / JCM 11832 / MCB-3) protein is A-type ATP synthase subunit B.